Consider the following 819-residue polypeptide: Protein SCARECROW (819 aa).

4 disordered regions span residues 6 to 49, 65 to 136, 212 to 231, and 393 to 420; these read LFNG…HSER, HNNN…INNN, SQNN…RNNT, and PLST…TTTT. The span at 15–33 shows a compositional bias: low complexity; that stretch reads TTPDETNNNSTSNSSNIST. Residues 79 to 98 are compositionally biased toward polar residues; it reads RTNNTSSLNCSLPATTQKGV. Over residues 99–136 the composition is skewed to low complexity; the sequence is TTTTTTTLASSGNNNNNNNNNNNYHYHNNNNNSIINNN. The stretch at 418-448 forms a coiled coil; that stretch reads TTTSAELALARKKKEEIKEQKKKDEEGLHLL. In terms of domain architecture, GRAS spans 438–806; sequence KKKDEEGLHL…LCLLTASAWR (369 aa). The interval 445–507 is leucine repeat I (LRI); that stretch reads LHLLTLLLQC…RLVSSCLGIY (63 aa). Residues 452 to 456 carry the LxCxE motif motif; the sequence is LQCAE. The tract at residues 526-591 is VHIID; that stretch reads FQVFNGISPF…GGPPYVRLTG (66 aa). Positions 557-561 match the VHIID motif; that stretch reads VHIID. Positions 601 to 633 are leucine repeat II (LRII); it reads ATGKRLSDFANKLGLPFEFFPVAEKVGNIDVEK. The interval 642–729 is PFYRE; it reads VAVHWLQHSL…QQLLSREIRN (88 aa). Residues 732 to 806 are SAW; the sequence is AVGGPSRSGE…LCLLTASAWR (75 aa).

The protein belongs to the GRAS family. In terms of tissue distribution, expressed in shoot apical meristem, leaf primordia, between the cortex and the differentiating vessels in lower shoots and in root endodermis.

Its subcellular location is the nucleus. Its function is as follows. Putative transcription factor involved in asymmetric cell division. This chain is Protein SCARECROW (SCR), found in Pisum sativum (Garden pea).